Consider the following 174-residue polypeptide: Peptide methionine sulfoxide reductase MsrA (174 aa).

Cys10 is a catalytic residue.

The protein belongs to the MsrA Met sulfoxide reductase family.

The catalysed reaction is L-methionyl-[protein] + [thioredoxin]-disulfide + H2O = L-methionyl-(S)-S-oxide-[protein] + [thioredoxin]-dithiol. The enzyme catalyses [thioredoxin]-disulfide + L-methionine + H2O = L-methionine (S)-S-oxide + [thioredoxin]-dithiol. Its function is as follows. Has an important function as a repair enzyme for proteins that have been inactivated by oxidation. Catalyzes the reversible oxidation-reduction of methionine sulfoxide in proteins to methionine. This Paenarthrobacter aurescens (strain TC1) protein is Peptide methionine sulfoxide reductase MsrA.